Consider the following 141-residue polypeptide: Large ribosomal subunit protein uL11 (141 aa).

Belongs to the universal ribosomal protein uL11 family. Part of the ribosomal stalk of the 50S ribosomal subunit. Interacts with L10 and the large rRNA to form the base of the stalk. L10 forms an elongated spine to which L12 dimers bind in a sequential fashion forming a multimeric L10(L12)X complex. Post-translationally, one or more lysine residues are methylated.

Forms part of the ribosomal stalk which helps the ribosome interact with GTP-bound translation factors. In Synechococcus sp. (strain WH7803), this protein is Large ribosomal subunit protein uL11.